Consider the following 549-residue polypeptide: Dicarboxylate transporter 2.2, chloroplastic (549 aa).

Residues 1-54 constitute a chloroplast transit peptide; that stretch reads MESLALRSISLSASYLSLHRSSSKSFALLPPSISVHTSPTLRSLSISSPRFTLR. The tract at residues 57-79 is disordered; that stretch reads ASSLPEEQNKPQPPPPSPPQPQG. Positions 67–77 are enriched in pro residues; sequence PQPPPPSPPQP. The next 12 membrane-spanning stretches (helical) occupy residues 79 to 99, 115 to 135, 151 to 171, 220 to 240, 247 to 267, 294 to 314, 344 to 364, 365 to 385, 403 to 423, 436 to 456, 470 to 490, and 523 to 543; these read GAKL…RFLI, IFLF…AWAF, TAFA…FFFA, AGGV…SYPG, LGSF…AILL, WFKV…LIIY, NEWI…FGEA, IGIA…LLGV, WFAV…VAWM, LTWP…HYLF, FLAM…CLAF, and VGFV…SFWW.

It belongs to the SLC13A/DASS transporter (TC 2.A.47) family. DIT1 subfamily. Expressed in roots, rosette and cauline leaves, stems, flowers and siliques.

Its subcellular location is the plastid. The protein localises to the chloroplast inner membrane. May be involved in the transport of dicarboxylate compounds. This Arabidopsis thaliana (Mouse-ear cress) protein is Dicarboxylate transporter 2.2, chloroplastic (DIT2-2).